The sequence spans 1607 residues: Thrombospondin type-1 domain-containing protein 7B (1607 aa).

Positions 1-31 are cleaved as a signal peptide; the sequence is MFLRSDLAVTHWVSRSMRKLFLVLSLLLSQA. The Extracellular segment spans residues 32-1556; sequence AHLEGRKDNQ…QPLDPDGRVK (1525 aa). TSP type-1 domains lie at 40 to 98, 102 to 177, 179 to 233, 336 to 392, 399 to 482, 484 to 543, 601 to 661, 662 to 735, 737 to 796, 797 to 869, 871 to 924, 925 to 999, 1001 to 1126, 1128 to 1182, 1183 to 1246, 1248 to 1303, 1304 to 1369, and 1371 to 1432; these read NQFL…RVCD, DLFQ…IPCP, DCVV…VSCP, DCET…IAEG, PRYS…VPCS, DCIV…PMCH, DCVV…HSCT, QLYW…LPCK, DCLV…SLCP, SYRW…IPCR, DCTF…CPCD, TFMS…IPCP, DCKL…LLCP, ECVM…ENCF, QFQY…VECV, NCQL…TPCY, SWVL…VPCP, and DCHI…GKCY. Residues asparagine 150 and asparagine 219 are each glycosylated (N-linked (GlcNAc...) asparagine). 3 disulfide bridges follow: cysteine 411–cysteine 477, cysteine 431–cysteine 481, and cysteine 442–cysteine 466. Disulfide bonds link cysteine 602–cysteine 643, cysteine 613–cysteine 617, and cysteine 655–cysteine 660. N-linked (GlcNAc...) asparagine glycosylation occurs at asparagine 683. Disulfide bonds link cysteine 738–cysteine 779, cysteine 749–cysteine 753, and cysteine 789–cysteine 795. The N-linked (GlcNAc...) asparagine glycan is linked to asparagine 757. N-linked (GlcNAc...) asparagine glycosylation occurs at asparagine 842. Asparagine 933 carries an N-linked (GlcNAc...) asparagine glycan. Disulfide bonds link cysteine 937-cysteine 994, cysteine 960-cysteine 998, cysteine 971-cysteine 984, cysteine 1002-cysteine 1039, and cysteine 1013-cysteine 1017. Asparagine 985 is a glycosylation site (N-linked (GlcNAc...) asparagine). N-linked (GlcNAc...) asparagine glycosylation occurs at asparagine 1105. The cysteines at positions 1121 and 1125 are disulfide-linked. N-linked (GlcNAc...) asparagine glycans are attached at residues asparagine 1187 and asparagine 1199. 3 disulfides stabilise this stretch: cysteine 1249–cysteine 1287, cysteine 1260–cysteine 1264, and cysteine 1297–cysteine 1302. 2 N-linked (GlcNAc...) asparagine glycosylation sites follow: asparagine 1309 and asparagine 1335. Intrachain disulfides connect cysteine 1372-cysteine 1416, cysteine 1383-cysteine 1387, and cysteine 1426-cysteine 1431. N-linked (GlcNAc...) asparagine glycans are attached at residues asparagine 1457 and asparagine 1525. A helical membrane pass occupies residues 1557-1577; the sequence is MWVYGVSGGSFLIMIFLVFTS. The Cytoplasmic segment spans residues 1578–1607; sequence YLVCKKPKPHQSTPRHQKPLTLAYDGDLDM.

The protein resides in the membrane. In Mus musculus (Mouse), this protein is Thrombospondin type-1 domain-containing protein 7B.